Consider the following 138-residue polypeptide: ATP synthase epsilon chain (138 aa).

This sequence belongs to the ATPase epsilon chain family. As to quaternary structure, F-type ATPases have 2 components, CF(1) - the catalytic core - and CF(0) - the membrane proton channel. CF(1) has five subunits: alpha(3), beta(3), gamma(1), delta(1), epsilon(1). CF(0) has three main subunits: a, b and c.

It is found in the cell inner membrane. Produces ATP from ADP in the presence of a proton gradient across the membrane. The protein is ATP synthase epsilon chain of Geotalea daltonii (strain DSM 22248 / JCM 15807 / FRC-32) (Geobacter daltonii).